The chain runs to 248 residues: Granzyme F (248 aa).

Positions 1-18 are cleaved as a signal peptide; the sequence is MPPILILLTLLLPLRAGA. The propeptide occupies 19-20; it reads EE. Residues 21–246 enclose the Peptidase S1 domain; that stretch reads IIGGHEVKPH…YLPWISRNMK (226 aa). Cysteine 50 and cysteine 66 are disulfide-bonded. The active-site Charge relay system is histidine 65. The N-linked (GlcNAc...) asparagine glycan is linked to asparagine 106. Aspartate 109 serves as the catalytic Charge relay system. Disulfide bonds link cysteine 143–cysteine 210 and cysteine 175–cysteine 189. A glycan (N-linked (GlcNAc...) asparagine) is linked at asparagine 154. Serine 204 serves as the catalytic Charge relay system. An N-linked (GlcNAc...) asparagine glycan is attached at asparagine 223.

This sequence belongs to the peptidase S1 family. Granzyme subfamily.

It is found in the cytolytic granule. Functionally, this enzyme is probably necessary for target cell lysis in cell-mediated immune responses. The protein is Granzyme F (Gzmf) of Mus musculus (Mouse).